Here is a 190-residue protein sequence, read N- to C-terminus: Potassium-transporting ATPase KdpC subunit (190 aa).

A helical membrane pass occupies residues Thr-10–Gly-30.

The protein belongs to the KdpC family. In terms of assembly, the system is composed of three essential subunits: KdpA, KdpB and KdpC.

It is found in the cell inner membrane. Part of the high-affinity ATP-driven potassium transport (or Kdp) system, which catalyzes the hydrolysis of ATP coupled with the electrogenic transport of potassium into the cytoplasm. This subunit acts as a catalytic chaperone that increases the ATP-binding affinity of the ATP-hydrolyzing subunit KdpB by the formation of a transient KdpB/KdpC/ATP ternary complex. The chain is Potassium-transporting ATPase KdpC subunit from Escherichia fergusonii (strain ATCC 35469 / DSM 13698 / CCUG 18766 / IAM 14443 / JCM 21226 / LMG 7866 / NBRC 102419 / NCTC 12128 / CDC 0568-73).